The sequence spans 331 residues: Adenosine deaminase (331 aa).

Zn(2+)-binding residues include histidine 12 and histidine 14. Positions 14 and 16 each coordinate substrate. Residue histidine 197 participates in Zn(2+) binding. Glutamate 200 (proton donor) is an active-site residue. Aspartate 278 is a binding site for Zn(2+).

This sequence belongs to the metallo-dependent hydrolases superfamily. Adenosine and AMP deaminases family. Adenosine deaminase subfamily. Requires Zn(2+) as cofactor.

It catalyses the reaction adenosine + H2O + H(+) = inosine + NH4(+). It carries out the reaction 2'-deoxyadenosine + H2O + H(+) = 2'-deoxyinosine + NH4(+). Its function is as follows. Catalyzes the hydrolytic deamination of adenosine and 2-deoxyadenosine. The polypeptide is Adenosine deaminase (Shewanella pealeana (strain ATCC 700345 / ANG-SQ1)).